Here is a 132-residue protein sequence, read N- to C-terminus: Interleukin-5 (132 aa).

The first 17 residues, Met1–Ala17, serve as a signal peptide directing secretion. 3 N-linked (GlcNAc...) asparagine glycosylation sites follow: Asn45, Asn74, and Asn88.

Belongs to the IL-5 family. In terms of assembly, homodimer; disulfide-linked. Interacts with IL5RA. Interacts with CSF2RB.

It is found in the secreted. In terms of biological role, homodimeric cytokine expressed predominantly by T-lymphocytes and NK cells that plays an important role in the survival, differentiation, and chemotaxis of eosinophils. Also acts on activated and resting B-cells to induce immunoglobulin production, growth, and differentiation. Mechanistically, exerts its biological effects through a receptor composed of IL5RA subunit and the cytokine receptor common subunit beta/CSF2RB. Binding to the receptor leads to activation of various kinases including LYN, SYK and JAK2 and thereby propagates signals through the RAS-MAPK and JAK-STAT5 pathways respectively. In Meriones unguiculatus (Mongolian jird), this protein is Interleukin-5 (IL5).